Consider the following 671-residue polypeptide: UvrABC system protein C (671 aa).

The GIY-YIG domain occupies 16–95; it reads VEPGVYRFRD…IKEFDPRFNV (80 aa). A UVR domain is found at 208 to 243; that stretch reads DRLARDMEREMNQAAQELNFERAARLRDNISALQRA. The disordered stretch occupies residues 645–671; sequence SSAPSSGATEAVLPAMVENGVDDTPST.

This sequence belongs to the UvrC family. In terms of assembly, interacts with UvrB in an incision complex.

The protein localises to the cytoplasm. The UvrABC repair system catalyzes the recognition and processing of DNA lesions. UvrC both incises the 5' and 3' sides of the lesion. The N-terminal half is responsible for the 3' incision and the C-terminal half is responsible for the 5' incision. This Mycobacteroides abscessus (strain ATCC 19977 / DSM 44196 / CCUG 20993 / CIP 104536 / JCM 13569 / NCTC 13031 / TMC 1543 / L948) (Mycobacterium abscessus) protein is UvrABC system protein C.